The primary structure comprises 310 residues: 4-hydroxy-3-methylbut-2-enyl diphosphate reductase (310 aa).

A [4Fe-4S] cluster-binding site is contributed by cysteine 13. Histidine 42 and histidine 75 together coordinate (2E)-4-hydroxy-3-methylbut-2-enyl diphosphate. The dimethylallyl diphosphate site is built by histidine 42 and histidine 75. Residues histidine 42 and histidine 75 each contribute to the isopentenyl diphosphate site. Residue cysteine 97 coordinates [4Fe-4S] cluster. Histidine 125 is a binding site for (2E)-4-hydroxy-3-methylbut-2-enyl diphosphate. Position 125 (histidine 125) interacts with dimethylallyl diphosphate. Histidine 125 provides a ligand contact to isopentenyl diphosphate. Glutamate 127 (proton donor) is an active-site residue. Threonine 165 provides a ligand contact to (2E)-4-hydroxy-3-methylbut-2-enyl diphosphate. Cysteine 195 is a binding site for [4Fe-4S] cluster. Residues serine 223, serine 224, asparagine 225, and serine 267 each coordinate (2E)-4-hydroxy-3-methylbut-2-enyl diphosphate. Residues serine 223, serine 224, asparagine 225, and serine 267 each coordinate dimethylallyl diphosphate. Isopentenyl diphosphate contacts are provided by serine 223, serine 224, asparagine 225, and serine 267.

Belongs to the IspH family. [4Fe-4S] cluster is required as a cofactor.

It catalyses the reaction isopentenyl diphosphate + 2 oxidized [2Fe-2S]-[ferredoxin] + H2O = (2E)-4-hydroxy-3-methylbut-2-enyl diphosphate + 2 reduced [2Fe-2S]-[ferredoxin] + 2 H(+). The catalysed reaction is dimethylallyl diphosphate + 2 oxidized [2Fe-2S]-[ferredoxin] + H2O = (2E)-4-hydroxy-3-methylbut-2-enyl diphosphate + 2 reduced [2Fe-2S]-[ferredoxin] + 2 H(+). It functions in the pathway isoprenoid biosynthesis; dimethylallyl diphosphate biosynthesis; dimethylallyl diphosphate from (2E)-4-hydroxy-3-methylbutenyl diphosphate: step 1/1. It participates in isoprenoid biosynthesis; isopentenyl diphosphate biosynthesis via DXP pathway; isopentenyl diphosphate from 1-deoxy-D-xylulose 5-phosphate: step 6/6. Catalyzes the conversion of 1-hydroxy-2-methyl-2-(E)-butenyl 4-diphosphate (HMBPP) into a mixture of isopentenyl diphosphate (IPP) and dimethylallyl diphosphate (DMAPP). Acts in the terminal step of the DOXP/MEP pathway for isoprenoid precursor biosynthesis. The protein is 4-hydroxy-3-methylbut-2-enyl diphosphate reductase of Chlamydia pneumoniae (Chlamydophila pneumoniae).